The chain runs to 61 residues: Sec-independent protein translocase protein TatA (61 aa).

Residues 1-21 (MFGIGMPEMLIILVIILIIFG) traverse the membrane as a helical segment.

The protein belongs to the TatA/E family. In terms of assembly, the Tat system comprises two distinct complexes: a TatABC complex, containing multiple copies of TatA, TatB and TatC subunits, and a separate TatA complex, containing only TatA subunits. Substrates initially bind to the TatABC complex, which probably triggers association of the separate TatA complex to form the active translocon.

The protein resides in the cell inner membrane. Its function is as follows. Part of the twin-arginine translocation (Tat) system that transports large folded proteins containing a characteristic twin-arginine motif in their signal peptide across membranes. TatA could form the protein-conducting channel of the Tat system. This Syntrophus aciditrophicus (strain SB) protein is Sec-independent protein translocase protein TatA.